A 242-amino-acid chain; its full sequence is tRNA (guanine-N(1)-)-methyltransferase (242 aa).

Residues Gly-111 and 130–135 (IGDYVL) each bind S-adenosyl-L-methionine.

Belongs to the RNA methyltransferase TrmD family. As to quaternary structure, homodimer.

It localises to the cytoplasm. It catalyses the reaction guanosine(37) in tRNA + S-adenosyl-L-methionine = N(1)-methylguanosine(37) in tRNA + S-adenosyl-L-homocysteine + H(+). Functionally, specifically methylates guanosine-37 in various tRNAs. This chain is tRNA (guanine-N(1)-)-methyltransferase, found in Aster yellows witches'-broom phytoplasma (strain AYWB).